A 165-amino-acid chain; its full sequence is Large ribosomal subunit protein uL10 (165 aa).

This sequence belongs to the universal ribosomal protein uL10 family. As to quaternary structure, part of the ribosomal stalk of the 50S ribosomal subunit. The N-terminus interacts with L11 and the large rRNA to form the base of the stalk. The C-terminus forms an elongated spine to which L12 dimers bind in a sequential fashion forming a multimeric L10(L12)X complex.

In terms of biological role, forms part of the ribosomal stalk, playing a central role in the interaction of the ribosome with GTP-bound translation factors. This chain is Large ribosomal subunit protein uL10, found in Burkholderia thailandensis (strain ATCC 700388 / DSM 13276 / CCUG 48851 / CIP 106301 / E264).